Here is a 160-residue protein sequence, read N- to C-terminus: Putative UPF0479 protein YNL339W-B (160 aa).

A run of 2 helical transmembrane segments spans residues 39–59 and 136–156; these read IVFC…KVLQ and VPMI…ISQH.

Belongs to the UPF0479 family.

Its subcellular location is the membrane. The protein is Putative UPF0479 protein YNL339W-B of Saccharomyces cerevisiae (strain ATCC 204508 / S288c) (Baker's yeast).